Consider the following 419-residue polypeptide: Glucose-1-phosphate adenylyltransferase (419 aa).

Residues tyrosine 107, glycine 172, 187-188 (EK), and serine 205 each bind alpha-D-glucose 1-phosphate.

Belongs to the bacterial/plant glucose-1-phosphate adenylyltransferase family. Homotetramer.

It carries out the reaction alpha-D-glucose 1-phosphate + ATP + H(+) = ADP-alpha-D-glucose + diphosphate. Its pathway is glycan biosynthesis; glycogen biosynthesis. Involved in the biosynthesis of ADP-glucose, a building block required for the elongation reactions to produce glycogen. Catalyzes the reaction between ATP and alpha-D-glucose 1-phosphate (G1P) to produce pyrophosphate and ADP-Glc. In Novosphingobium aromaticivorans (strain ATCC 700278 / DSM 12444 / CCUG 56034 / CIP 105152 / NBRC 16084 / F199), this protein is Glucose-1-phosphate adenylyltransferase.